We begin with the raw amino-acid sequence, 223 residues long: Endonuclease V (223 aa).

Residues D35 and D103 each contribute to the Mg(2+) site.

The protein belongs to the endonuclease V family. Mg(2+) is required as a cofactor.

The protein localises to the cytoplasm. The enzyme catalyses Endonucleolytic cleavage at apurinic or apyrimidinic sites to products with a 5'-phosphate.. Its function is as follows. DNA repair enzyme involved in the repair of deaminated bases. Selectively cleaves double-stranded DNA at the second phosphodiester bond 3' to a deoxyinosine leaving behind the intact lesion on the nicked DNA. The polypeptide is Endonuclease V (Escherichia coli O139:H28 (strain E24377A / ETEC)).